A 1405-amino-acid polypeptide reads, in one-letter code: MHMKIKKFKKIKKKSKILVKAKLIAQQVENNREEYSALSIEDLRIRTDYLVDGLAKDKFTLEDIIVDALSIAREIIYREHGMLAYEVQMMGAYVVHTGDFAEMYTGEGKSLTLLLVSFVNALTKRGVHIVTVNEYLVERDALFAQKAFEKLGITVGYNTSKLSKATKKEMFARDITYTTNSELGFDYLKDNMVRDINEKVIRELFFVIVDEADSVLIDEARTPLIISGQPKEDFSLYLDIDKFVGSLAEDDYKIDNESNTIALTDQGVSKAEKFFNLTNLYSVESAEIVHKITNSLVAHYIFANGKEYLVKDDKIYLVDQFTGRVLEGRSYNAGLQQAIQAKERVTIEPENVVMATITYQSFFRLYEKLSGVSGTAMTEAEEFLKIYNMVVVRIPTNKPVARIDKQDYIFGTKRVKWNHVIQEIVNRHETGQPILVGTASVTDSEIIHERLTELKIPHEVLNARDNTKEAEIVKHAGEKGAITISTNMAGRGTDIKVSDEIRELGGLYVIGTERHESRRIDNQLRGRTGRQGDPGESRFFTSLEDALFKRFATDRFEKASQKLEEEFYDSRFFSKMLDRTQKKVEGLNFDIRKNLMDYDHVLSLQRELIYKQRDQILLKTNNLNIINNMIDDYVETEILNFKNNDNTSLVDANKIVAFLNEKILKFSYFTPATFANMPILLAIDKAISIIKKVVDVKCKILEKINGLNVIDEILLVNLDQKWTTHIDKMTKLREGVNLRSLEQRSPLNIYIEDGNNLFERMKINVVTDTITSICNLSLPNEMIEITNALDEFVNSEEFKKKNYGNQREIEQNFNSALSFSGSATSEFDNFIESELENTLIEETPEEYVEVEEYIPQQTEPEVVETETTPYGFEIPKYDTSGTDKYELNNGSSEVNILENESDIFENSFSQIQNTFNTEELDPQETPHTAKADDQFVFESANLEDDIEEIENVSNIDKAPEIQQPLSEEEIQKILDMPAFKDDEKPLTIGNYLDNILDSMDIDYDQDKEITQQLEPSSNEQEVTANIPEQNQLDITTSDIDNEIELLDESERESIKEEIQKSISFDLSNDPDFIEYRNSVFVNKNNGIDYSDYKKLNEDESDDDIKAFYKLPKVDKKEPGTLFGGNLLKKTPFNFKNKNELDNEKIKSTNLFREENQASEQELNTLLQLDDEKDRLEKINQLLNKEDPEVLERKELERQVEFETPVYYLEDIPEGESLDNFKAMDNPHEEQSFEDNLVDEENQQLEFEEALDEVIDDGQFNDEVEAAELSEEVLEEVINPNPEELSEEDKWLITKKEHEKFMEKYLGDVKELTSENPEVVTALLQEKNKNLKDVEIIENNEELENTNEEEPNINSQDSFLNNIKIIKTVDKESEDETEIIQEINQPAEIHNLQKDILDYLKENNKK.

The tract at residues 1 to 1099 is protein translocase subunit SecA; sequence MHMKIKKFKK…SDYKKLNEDE (1099 aa). Residues Q88, 106-110, and D494 contribute to the ATP site; that span reads GEGKS. The segment at 1100–1405 is unknown; it reads SDDDIKAFYK…LDYLKENNKK (306 aa).

It belongs to the SecA family. As to quaternary structure, monomer and homodimer. Part of the essential Sec protein translocation apparatus which comprises SecA, SecYEG and auxiliary proteins SecDF. Other proteins may also be involved.

It localises to the cell membrane. Its subcellular location is the cytoplasm. It carries out the reaction ATP + H2O + cellular proteinSide 1 = ADP + phosphate + cellular proteinSide 2.. Functionally, part of the Sec protein translocase complex. Interacts with the SecYEG preprotein conducting channel. Has a central role in coupling the hydrolysis of ATP to the transfer of proteins into and across the cell membrane, serving as an ATP-driven molecular motor driving the stepwise translocation of polypeptide chains across the membrane. The polypeptide is Protein translocase subunit SecA (Malacoplasma penetrans (strain HF-2) (Mycoplasma penetrans)).